We begin with the raw amino-acid sequence, 56 residues long: Large ribosomal subunit protein uL30 (56 aa).

Belongs to the universal ribosomal protein uL30 family. As to quaternary structure, part of the 50S ribosomal subunit.

This is Large ribosomal subunit protein uL30 from Nitratidesulfovibrio vulgaris (strain DSM 19637 / Miyazaki F) (Desulfovibrio vulgaris).